The chain runs to 297 residues: MPPSPCAVLRVRHTKPARAAGVAAHRSFSLCNEAVYRRGQKVFPLVLRRAARFLHECLPARCEVFEHARSEAKKVHRRYFLPGECAGRACRVWRAVFRALXGNDPSAAVRVPADVRVFVYGTHQASCGGDCGGGGRDCGVSVRKGADTARNATGFAERVHKGVADHGVACRVQPLRGKVRGKRFVRVASVVVISVDNRKRCSQLCACAQQRVRRPPRRAPRRMRQSGAVCPCFLCREGLKHVLRIAVLREVVKQARAKVALYIMPNNTQHAGKPGAQHRTRRSPPAFRRADRLRQSA.

The tract at residues 267–297 (NTQHAGKPGAQHRTRRSPPAFRRADRLRQSA) is disordered. The segment covering 288–297 (RRADRLRQSA) has biased composition (basic and acidic residues).

This is an uncharacterized protein from Treponema pallidum (strain Nichols).